We begin with the raw amino-acid sequence, 369 residues long: Histidinol-phosphate aminotransferase (369 aa).

Residues 1 to 39 form a disordered region; sequence MSFGIDDLPVRDELRGKSPYGAPQLDVPVRLNTNENPYP. An N6-(pyridoxal phosphate)lysine modification is found at K230.

Belongs to the class-II pyridoxal-phosphate-dependent aminotransferase family. Histidinol-phosphate aminotransferase subfamily. Homodimer. Pyridoxal 5'-phosphate is required as a cofactor.

It carries out the reaction L-histidinol phosphate + 2-oxoglutarate = 3-(imidazol-4-yl)-2-oxopropyl phosphate + L-glutamate. The protein operates within amino-acid biosynthesis; L-histidine biosynthesis; L-histidine from 5-phospho-alpha-D-ribose 1-diphosphate: step 7/9. The protein is Histidinol-phosphate aminotransferase (hisC) of Streptomyces avermitilis (strain ATCC 31267 / DSM 46492 / JCM 5070 / NBRC 14893 / NCIMB 12804 / NRRL 8165 / MA-4680).